A 320-amino-acid chain; its full sequence is Ferrochelatase (320 aa).

Fe cation contacts are provided by histidine 194 and glutamate 275.

This sequence belongs to the ferrochelatase family. In terms of assembly, monomer.

The protein resides in the cytoplasm. The enzyme catalyses heme b + 2 H(+) = protoporphyrin IX + Fe(2+). It functions in the pathway porphyrin-containing compound metabolism; protoheme biosynthesis; protoheme from protoporphyrin-IX: step 1/1. Its function is as follows. Catalyzes the ferrous insertion into protoporphyrin IX. This is Ferrochelatase from Escherichia coli O139:H28 (strain E24377A / ETEC).